Consider the following 150-residue polypeptide: uncharacterized protein (150 aa).

The Flavodoxin-like domain maps to 3–145; that stretch reads VAILSGSVYG…DAEPWLAEFA (143 aa).

It belongs to the flavodoxin family. MioC subfamily. Requires FMN as cofactor.

Functionally, probable electron transporter. This is an uncharacterized protein from Pseudomonas aeruginosa (strain ATCC 15692 / DSM 22644 / CIP 104116 / JCM 14847 / LMG 12228 / 1C / PRS 101 / PAO1).